We begin with the raw amino-acid sequence, 415 residues long: MPKPLNNTENNLNTNRIKDLIKKYSPPFWVYDADIIYKKINLLRKFDVIRFAQKSCSNINILRLMKNKNVKIDAVSLGEIERALLSGFKPSTNEIIFTADILDEETLLKVAKYKIPVNAGSLDMLKQLGKISPGHHVWLRINPRFGYGHSKKTNTGGENSKHGIWHPEQAIPIIKKYKLKLIGLHMHIGSGVNYLHLKKVSQAMIKYAFQLNQKISSISVGGGLPIPYKFNDQPIDIKKYFMLWDIARKKISKFLGEKIELEIEPGRFLVAESGILISKVWATKKMGNKNFVLVDVGFNDLMRPTMYGSYHHISVIYGDDRKMNEKETIDTVVAGPLCESGDIFTQKEGGTVQTRKLPTIKVGDYLIFHDTGAYGAAMSSNYNTRPLIPEILLKNNDSIVIRRRQTIEEILNLEK.

At K54 the chain carries N6-(pyridoxal phosphate)lysine. Residues G223 and 264–267 (EPGR) each bind pyridoxal 5'-phosphate. 3 residues coordinate substrate: R267, R303, and Y307. C338 functions as the Proton donor in the catalytic mechanism. Substrate-binding residues include E339 and Y374. Y374 provides a ligand contact to pyridoxal 5'-phosphate.

Belongs to the Orn/Lys/Arg decarboxylase class-II family. LysA subfamily. As to quaternary structure, homodimer. Pyridoxal 5'-phosphate serves as cofactor.

It carries out the reaction meso-2,6-diaminopimelate + H(+) = L-lysine + CO2. Its pathway is amino-acid biosynthesis; L-lysine biosynthesis via DAP pathway; L-lysine from DL-2,6-diaminopimelate: step 1/1. Its function is as follows. Specifically catalyzes the decarboxylation of meso-diaminopimelate (meso-DAP) to L-lysine. The sequence is that of Diaminopimelate decarboxylase from Buchnera aphidicola subsp. Acyrthosiphon pisum (strain APS) (Acyrthosiphon pisum symbiotic bacterium).